The following is a 260-amino-acid chain: Acyl-[acyl-carrier-protein]--UDP-N-acetylglucosamine O-acyltransferase (260 aa).

Belongs to the transferase hexapeptide repeat family. LpxA subfamily. Homotrimer.

The protein resides in the cytoplasm. It carries out the reaction a (3R)-hydroxyacyl-[ACP] + UDP-N-acetyl-alpha-D-glucosamine = a UDP-3-O-[(3R)-3-hydroxyacyl]-N-acetyl-alpha-D-glucosamine + holo-[ACP]. Its pathway is glycolipid biosynthesis; lipid IV(A) biosynthesis; lipid IV(A) from (3R)-3-hydroxytetradecanoyl-[acyl-carrier-protein] and UDP-N-acetyl-alpha-D-glucosamine: step 1/6. In terms of biological role, involved in the biosynthesis of lipid A, a phosphorylated glycolipid that anchors the lipopolysaccharide to the outer membrane of the cell. This chain is Acyl-[acyl-carrier-protein]--UDP-N-acetylglucosamine O-acyltransferase, found in Sulfurovum sp. (strain NBC37-1).